We begin with the raw amino-acid sequence, 136 residues long: Histone H3 (136 aa).

The interval 1 to 43 (MARTKQTARKSTGGKAPRKQLATKAARKSAPASGGVKKPHRFR) is disordered. Lys-5 carries the post-translational modification N6-methylated lysine. Lys-10 bears the N6-acetyllysine; alternate mark. An N6-methylated lysine; alternate modification is found at Lys-10. Ser-11 is subject to Phosphoserine. Thr-12 carries the phosphothreonine modification. An N6-acetyllysine modification is found at Lys-15. An N6-acetyllysine; alternate mark is found at Lys-19 and Lys-24. N6-methylated lysine; alternate occurs at positions 19 and 24. The residue at position 28 (Lys-28) is an N6-methylated lysine. Residue Ser-29 is modified to Phosphoserine. Lys-37 carries the N6-methylated lysine modification.

This sequence belongs to the histone H3 family. As to quaternary structure, the nucleosome is a histone octamer containing two molecules each of H2A, H2B, H3 and H4 assembled in one H3-H4 heterotetramer and two H2A-H2B heterodimers. The octamer wraps approximately 147 bp of DNA. Acetylation is generally linked to gene activation. Can be acetylated to form H3K9ac, H3K14ac, H3K18ac and H3K23ac. H3K9ac could compete with H3K9me and prevent gene silencing. H3K9ac is restricted to euchromatin. In terms of processing, methylated to form mainly H3K4me, H3K9me, H3K18me, H3K23me, H3K27me and H3K36me. H3K4me1/2/3, H3K9me3, H3K27me3 and H3K36me1/2/3 are typical marks for euchromatin, whereas heterochromatic chromocenters are enriched in H3K9me1/2 and H3K27me1/2. H2BK143ub1 is probably prerequisite for H3K4me. Post-translationally, can be phosphorylated to form H3S10ph, H3T11ph and H3S28ph.

It localises to the nucleus. It is found in the chromosome. Core component of nucleosome. Nucleosomes wrap and compact DNA into chromatin, limiting DNA accessibility to the cellular machineries which require DNA as a template. Histones thereby play a central role in transcription regulation, DNA repair, DNA replication and chromosomal stability. DNA accessibility is regulated via a complex set of post-translational modifications of histones, also called histone code, and nucleosome remodeling. This is Histone H3 from Griffithsia japonica (Red alga).